The primary structure comprises 287 residues: MADPSASLNLVEACWRDLVLGVVQGLTEFLPISSTAHLKVVPELLGWGDPGVSVTAAIQLGSIAAVIAYFRTDLSQVLRGVSRAFRYGQWREPEARLGFAMVVGTLPILVIGLGIKFAWSQGYEQSPLRSIPSIAIVSIVMALLLALAEQVGARSKQLDVVLGRDGLLVGLAQALALLPGVSRSGSTLTAALFDGWQRADAARFSFLLGIPGITIAGLVELKDALAASPGNGPLPLLVGIGSAAVVSWLAIDWLLKFLQRNSTWLFVAYRLVFGLLLLVWWGVYGSH.

7 consecutive transmembrane segments (helical) span residues 50 to 70, 97 to 117, 131 to 151, 160 to 180, 206 to 226, 234 to 254, and 264 to 284; these read PGVS…IAYF, LGFA…GIKF, IPSI…AEQV, VVLG…LLPG, FLLG…DALA, LPLL…IDWL, and WLFV…WGVY.

The protein belongs to the UppP family.

The protein resides in the cell inner membrane. The catalysed reaction is di-trans,octa-cis-undecaprenyl diphosphate + H2O = di-trans,octa-cis-undecaprenyl phosphate + phosphate + H(+). Functionally, catalyzes the dephosphorylation of undecaprenyl diphosphate (UPP). Confers resistance to bacitracin. This Synechococcus sp. (strain CC9605) protein is Undecaprenyl-diphosphatase.